The chain runs to 272 residues: tRNA pseudouridine synthase A (272 aa).

D62 (nucleophile) is an active-site residue. Y120 serves as a coordination point for substrate.

This sequence belongs to the tRNA pseudouridine synthase TruA family. In terms of assembly, homodimer.

It catalyses the reaction uridine(38/39/40) in tRNA = pseudouridine(38/39/40) in tRNA. Functionally, formation of pseudouridine at positions 38, 39 and 40 in the anticodon stem and loop of transfer RNAs. The chain is tRNA pseudouridine synthase A from Nitrosomonas europaea (strain ATCC 19718 / CIP 103999 / KCTC 2705 / NBRC 14298).